Here is a 154-residue protein sequence, read N- to C-terminus: MATATTTTATESPSNSGRRQARYLCLTILGYRKPGMSEEDYRNHMVNVSAPLTKDLMVKYGVKRWTQIHNQSETKALMSQLFDPQMCNLADYDCFSQVVFENIEDYKRMKQDPWYKKHLVGDHENFADTKRSQMTIGWVEEFVRDGQVVEGFKG.

Belongs to the tpcK family.

The enzyme catalyses atrochrysone carboxylate + H(+) = atrochrysone + CO2. It functions in the pathway pigment biosynthesis. In terms of biological role, decarboxylase involved in the biosynthesis of the bianthraquinone cladofulvin, a conidial pigment not required for virulence but that plays a role in fitness and resistance to environmental stresses including UV light and low-temperature stress. The pathway begins with the synthesis of atrochrysone thioester by the polyketide synthase (PKS) claG. The atrochrysone carboxyl ACP thioesterase claF then breaks the thioester bond and releases the atrochrysone carboxylic acid from claG. This compound is decarboxylated by claH to yield emodin, which is further converted to chrysophanol hydroquinone by the reductase claC and the dehydratase claB. The cytochrome monooxygenase P450 claM then catalyzes the dimerization of nataloe-emodin to cladofulvin. In Passalora fulva (Tomato leaf mold), this protein is Decarboxylase claH.